The sequence spans 556 residues: Arginine--tRNA ligase (556 aa).

The 'HIGH' region signature appears at 132–142 (ANPTGDLHLGH).

It belongs to the class-I aminoacyl-tRNA synthetase family. In terms of assembly, monomer.

Its subcellular location is the cytoplasm. The enzyme catalyses tRNA(Arg) + L-arginine + ATP = L-arginyl-tRNA(Arg) + AMP + diphosphate. This chain is Arginine--tRNA ligase, found in Listeria monocytogenes serovar 1/2a (strain ATCC BAA-679 / EGD-e).